Consider the following 573-residue polypeptide: Urease subunit alpha 2 (573 aa).

In terms of domain architecture, Urease spans 135–573; it reads GGMDTHVHYI…ISLNQLYFFS (439 aa). Residues His-140, His-142, and Lys-223 each contribute to the Ni(2+) site. At Lys-223 the chain carries N6-carboxylysine. Residue His-225 coordinates substrate. Ni(2+) contacts are provided by His-252 and His-278. The active-site Proton donor is His-326. Residue Asp-366 coordinates Ni(2+).

It belongs to the metallo-dependent hydrolases superfamily. Urease alpha subunit family. As to quaternary structure, heterotrimer of UreA (gamma), UreB (beta) and UreC (alpha) subunits. Three heterotrimers associate to form the active enzyme. Ni cation serves as cofactor. Carboxylation allows a single lysine to coordinate two nickel ions.

Its subcellular location is the cytoplasm. The enzyme catalyses urea + 2 H2O + H(+) = hydrogencarbonate + 2 NH4(+). Its pathway is nitrogen metabolism; urea degradation; CO(2) and NH(3) from urea (urease route): step 1/1. Its function is as follows. Disrupting the ure2 operon has no effect on urease activity, or pathogen survival in BALB/c mice when inoculated by gavage, but confers slightly enhanced resistance to low pH killing in vitro. This is Urease subunit alpha 2 from Brucella suis biovar 1 (strain 1330).